Consider the following 162-residue polypeptide: Peptidyl-prolyl cis-trans isomerase (162 aa).

The residue at position 2 (Ser-2) is an N-acetylserine. A PPIase cyclophilin-type domain is found at 5–161 (YFDVEADGQP…ARIVVAKSGE (157 aa)). Residues Lys-29 and Lys-42 each participate in a glycyl lysine isopeptide (Lys-Gly) (interchain with G-Cter in ubiquitin) cross-link. A Phosphothreonine modification is found at Thr-71. Glycyl lysine isopeptide (Lys-Gly) (interchain with G-Cter in ubiquitin) cross-links involve residues Lys-123 and Lys-139. Residues Ser-142 and Ser-145 each carry the phosphoserine modification. Residues Lys-151 and Lys-158 each participate in a glycyl lysine isopeptide (Lys-Gly) (interchain with G-Cter in ubiquitin) cross-link.

It belongs to the cyclophilin-type PPIase family. PPIase A subfamily. Interacts with a complex composed of SIN3 and RPD3. Identified in the Set3C complex with HOS2, HST1, SNT1, SIF2, HOS4/YIL112W and SET3.

Its subcellular location is the cytoplasm. The protein localises to the nucleus. It is found in the mitochondrion intermembrane space. The catalysed reaction is [protein]-peptidylproline (omega=180) = [protein]-peptidylproline (omega=0). Its activity is regulated as follows. Binds cyclosporin A (CsA). CsA mediates some of its effects via an inhibitory action on PPIase. In terms of biological role, PPIases accelerate the folding of proteins. It catalyzes the cis-trans isomerization of proline imidic peptide bonds in oligopeptides. Involved in histone deacetylase complexes, suggesting a function in chromatin. Imports fructose-1,6-bisphosphatase (FBPase) into the intermediate vacuole import and degradation (Vid) vesicles. Regulates the meiotic gene program via the Set3C histone deacetylase complex to promote efficient sporulation, and the prolyl-isomerase activity is required for this function. This chain is Peptidyl-prolyl cis-trans isomerase (CPR1), found in Saccharomyces cerevisiae (strain ATCC 204508 / S288c) (Baker's yeast).